Reading from the N-terminus, the 117-residue chain is Large ribosomal subunit protein bL20 (117 aa).

The protein belongs to the bacterial ribosomal protein bL20 family.

Binds directly to 23S ribosomal RNA and is necessary for the in vitro assembly process of the 50S ribosomal subunit. It is not involved in the protein synthesizing functions of that subunit. The sequence is that of Large ribosomal subunit protein bL20 from Rickettsia typhi (strain ATCC VR-144 / Wilmington).